Consider the following 368-residue polypeptide: Histidinol-phosphate aminotransferase (368 aa).

N6-(pyridoxal phosphate)lysine is present on K215.

It belongs to the class-II pyridoxal-phosphate-dependent aminotransferase family. Histidinol-phosphate aminotransferase subfamily. As to quaternary structure, homodimer. It depends on pyridoxal 5'-phosphate as a cofactor.

It carries out the reaction L-histidinol phosphate + 2-oxoglutarate = 3-(imidazol-4-yl)-2-oxopropyl phosphate + L-glutamate. It functions in the pathway amino-acid biosynthesis; L-histidine biosynthesis; L-histidine from 5-phospho-alpha-D-ribose 1-diphosphate: step 7/9. This is Histidinol-phosphate aminotransferase from Buchnera aphidicola subsp. Acyrthosiphon pisum (strain 5A).